The sequence spans 297 residues: Homoserine kinase (297 aa).

79–89 (PIARGLGSSGA) lines the ATP pocket.

The protein belongs to the GHMP kinase family. Homoserine kinase subfamily.

The protein localises to the cytoplasm. The catalysed reaction is L-homoserine + ATP = O-phospho-L-homoserine + ADP + H(+). Its pathway is amino-acid biosynthesis; L-threonine biosynthesis; L-threonine from L-aspartate: step 4/5. Functionally, catalyzes the ATP-dependent phosphorylation of L-homoserine to L-homoserine phosphate. This is Homoserine kinase from Pyrobaculum aerophilum (strain ATCC 51768 / DSM 7523 / JCM 9630 / CIP 104966 / NBRC 100827 / IM2).